The chain runs to 261 residues: Thiamine thiazole synthase (261 aa).

Residues S33, 52-53, G60, V124, and 152-154 contribute to the NAD(+) site; these read ER and HVD. D154 and H169 together coordinate Fe cation. M219 provides a ligand contact to NAD(+). R229 is a binding site for glycine.

The protein belongs to the THI4 family. Homooctamer; tetramer of dimers. Fe(2+) is required as a cofactor.

The catalysed reaction is hydrogen sulfide + glycine + NAD(+) = ADP-5-ethyl-4-methylthiazole-2-carboxylate + nicotinamide + 3 H2O + H(+). The protein operates within cofactor biosynthesis; thiamine diphosphate biosynthesis. In terms of biological role, involved in the biosynthesis of the thiazole moiety of thiamine. Catalyzes the conversion of NAD and glycine to adenosine diphosphate 5-(2-hydroxyethyl)-4-methylthiazole-2-carboxylate (ADT), an adenylated thiazole intermediate, using free sulfide as a source of sulfur. This Pyrobaculum arsenaticum (strain DSM 13514 / JCM 11321 / PZ6) protein is Thiamine thiazole synthase.